Reading from the N-terminus, the 86-residue chain is Stage V sporulation protein S (86 aa).

Interferes with sporulation at an early stage. Seems to play a positive role in allowing cells to progress beyond stage V of sporulation. This Bacillus subtilis (strain 168) protein is Stage V sporulation protein S.